The following is a 483-amino-acid chain: Glutamate--tRNA ligase (483 aa).

The 'HIGH' region motif lies at Pro-11–Asn-21. Zn(2+) contacts are provided by Cys-108, Cys-110, Cys-135, and His-137. A 'KMSKS' region motif is present at residues Lys-252 to Arg-256. Lys-255 serves as a coordination point for ATP.

This sequence belongs to the class-I aminoacyl-tRNA synthetase family. Glutamate--tRNA ligase type 1 subfamily. Monomer. It depends on Zn(2+) as a cofactor.

It is found in the cytoplasm. It carries out the reaction tRNA(Glu) + L-glutamate + ATP = L-glutamyl-tRNA(Glu) + AMP + diphosphate. Its function is as follows. Catalyzes the attachment of glutamate to tRNA(Glu) in a two-step reaction: glutamate is first activated by ATP to form Glu-AMP and then transferred to the acceptor end of tRNA(Glu). In Bacillus pumilus (strain SAFR-032), this protein is Glutamate--tRNA ligase.